A 255-amino-acid chain; its full sequence is Thiazole synthase (255 aa).

The Schiff-base intermediate with DXP role is filled by Lys-96. Residues Gly-157, 183 to 184 (AG), and 205 to 206 (NS) contribute to the 1-deoxy-D-xylulose 5-phosphate site.

The protein belongs to the ThiG family. Homotetramer. Forms heterodimers with either ThiH or ThiS.

It localises to the cytoplasm. It catalyses the reaction [ThiS sulfur-carrier protein]-C-terminal-Gly-aminoethanethioate + 2-iminoacetate + 1-deoxy-D-xylulose 5-phosphate = [ThiS sulfur-carrier protein]-C-terminal Gly-Gly + 2-[(2R,5Z)-2-carboxy-4-methylthiazol-5(2H)-ylidene]ethyl phosphate + 2 H2O + H(+). It functions in the pathway cofactor biosynthesis; thiamine diphosphate biosynthesis. Catalyzes the rearrangement of 1-deoxy-D-xylulose 5-phosphate (DXP) to produce the thiazole phosphate moiety of thiamine. Sulfur is provided by the thiocarboxylate moiety of the carrier protein ThiS. In vitro, sulfur can be provided by H(2)S. The sequence is that of Thiazole synthase from Exiguobacterium sibiricum (strain DSM 17290 / CCUG 55495 / CIP 109462 / JCM 13490 / 255-15).